Consider the following 255-residue polypeptide: Tail completion protein p143 (255 aa).

It localises to the virion. Its function is as follows. Putative role in tail stability. This chain is Tail completion protein p143, found in Escherichia phage T5 (Enterobacteria phage T5).